A 298-amino-acid polypeptide reads, in one-letter code: MKAENVKLGIAPIGWTNDDLPEIGKENTFEQCVSEMALAGFTGSEVGSKYPRDIDVLKRKLDLRGIQICNAWFSTFFVDGKKEETIKGFIEHRDFLHAMGAKVIGCSEQSRSIQGQKKAIFKEKTIFTEAEWQLLAEGYNELAKLAAEKGMKVCLHHHMGTGIQTPAEIDKYMEITNDDVYLLFDSGHLYYSEGSQQVMLEVLEKYIHRVVHVHLKDVRDEVVAEVKANDLSFLEGVVKGTFTVPGDGVIDFKPIFDILEKYDYKGWMVVEAEQDPAIANPLEYAIKGRQYIREVAGV.

It belongs to the IolE/MocC family. Requires glutathione as cofactor. It depends on Co(2+) as a cofactor. Mn(2+) is required as a cofactor.

It catalyses the reaction scyllo-inosose = 3D-3,5/4-trihydroxycyclohexane-1,2-dione + H2O. Its function is as follows. Catalyzes the dehydration of inosose (2-keto-myo-inositol, 2KMI or 2,4,6/3,5-pentahydroxycyclohexanone) to 3D-(3,5/4)-trihydroxycyclohexane-1,2-dione (D-2,3-diketo-4-deoxy-epi-inositol). The polypeptide is Inosose dehydratase (Histophilus somni (strain 129Pt) (Haemophilus somnus)).